Consider the following 132-residue polypeptide: MTMTDPIADFLTRLRNANSAYHDEVTLPHSKLKANIAQILKNEGYISDFRTEDARVGKSLIVQLKYGPSRERSIAGLRRVSKPGLRVYAKSTNLPRVLGGLGVAIISTSSGLLTDRQAARQGVGGEVLAYVW.

The protein belongs to the universal ribosomal protein uS8 family. As to quaternary structure, part of the 30S ribosomal subunit. Contacts proteins S5 and S12.

Functionally, one of the primary rRNA binding proteins, it binds directly to 16S rRNA central domain where it helps coordinate assembly of the platform of the 30S subunit. The sequence is that of Small ribosomal subunit protein uS8 from Mycobacterium avium (strain 104).